The sequence spans 145 residues: Succinate dehydrogenase assembly factor 2, mitochondrial (145 aa).

This sequence belongs to the SDHAF2 family. Interacts with the flavoprotein subunit within the SDH catalytic dimer.

It is found in the mitochondrion matrix. Its function is as follows. Plays an essential role in the assembly of succinate dehydrogenase (SDH), an enzyme complex (also referred to as respiratory complex II) that is a component of both the tricarboxylic acid (TCA) cycle and the mitochondrial electron transport chain, and which couples the oxidation of succinate to fumarate with the reduction of ubiquinone (coenzyme Q) to ubiquinol. Required for flavinylation (covalent attachment of FAD) of the flavoprotein subunit of the SDH catalytic dimer. The polypeptide is Succinate dehydrogenase assembly factor 2, mitochondrial (Yarrowia lipolytica (strain CLIB 122 / E 150) (Yeast)).